We begin with the raw amino-acid sequence, 434 residues long: Nicotinate phosphoribosyltransferase (434 aa).

His242 carries the phosphohistidine; by autocatalysis modification.

This sequence belongs to the NAPRTase family. In terms of processing, transiently phosphorylated on a His residue during the reaction cycle. Phosphorylation strongly increases the affinity for substrates and increases the rate of nicotinate D-ribonucleotide production. Dephosphorylation regenerates the low-affinity form of the enzyme, leading to product release.

It carries out the reaction nicotinate + 5-phospho-alpha-D-ribose 1-diphosphate + ATP + H2O = nicotinate beta-D-ribonucleotide + ADP + phosphate + diphosphate. The protein operates within cofactor biosynthesis; NAD(+) biosynthesis; nicotinate D-ribonucleotide from nicotinate: step 1/1. Catalyzes the synthesis of beta-nicotinate D-ribonucleotide from nicotinate and 5-phospho-D-ribose 1-phosphate at the expense of ATP. The polypeptide is Nicotinate phosphoribosyltransferase (Agrobacterium fabrum (strain C58 / ATCC 33970) (Agrobacterium tumefaciens (strain C58))).